We begin with the raw amino-acid sequence, 559 residues long: Actin-binding protein WASF1 (559 aa).

3 disordered regions span residues 169 to 202 (TEDK…DRRR), 307 to 400 (RPQS…SPPV), and 412 to 492 (VHPL…STLP). A compositionally biased stretch (basic and acidic residues) spans 182-202 (KNLDRPHEPEKVPRAPHDRRR). The segment covering 322–332 (PTPPPPPPPLP) has biased composition (pro residues). Low complexity predominate over residues 333 to 346 (SALSTSSLRASMTS). Position 341 is an asymmetric dimethylarginine; alternate (Arg-341). Arg-341 bears the Omega-N-methylarginine; alternate mark. Composition is skewed to pro residues over residues 347-374 (TPPP…PPAP), 384-399 (PAPP…PSPP), 423-437 (LPPP…PPGI), and 458-477 (TPSP…PPSQ). Phosphoserine is present on Ser-489. One can recognise a WH2 domain in the interval 497–514 (ARSVLLEAIRKGIQLRKV).

The protein belongs to the SCAR/WAVE family. As to quaternary structure, component of the WAVE1 complex composed of ABI2, CYFIP1 or CYFIP2, BRK1, NCKAP1 and WASF1/WAVE1. Within the complex, a heterodimer containing NCKAP1 and CYFIP1 interacts with a heterotrimer formed by WAVE1, ABI2 and BRK1. CYFIP2 binds to activated RAC1 which causes the complex to dissociate, releasing activated WASF1. The complex can also be activated by NCK1. Binds actin and the Arp2/3 complex. Interacts with BAIAP2. Interacts with SHANK3; the interaction mediates the association of SHANK3 with the WAVE1 complex. Interacts with ABI1 (via N-terminus). Interacts with SORBS2; this interaction greatly enhances phosphorylation by ABL1 and dephosphorylation by PTPN12 and might mediate partial to focal adhesion sites. In terms of tissue distribution, expressed in hippocampal neurons (at protein level).

It localises to the cytoplasm. The protein resides in the cytoskeleton. Its subcellular location is the synapse. It is found in the cell junction. The protein localises to the focal adhesion. In terms of biological role, downstream effector molecule involved in the transmission of signals from tyrosine kinase receptors and small GTPases to the actin cytoskeleton. Promotes formation of actin filaments. Part of the WAVE complex that regulates lamellipodia formation. The WAVE complex regulates actin filament reorganization via its interaction with the Arp2/3 complex. As component of the WAVE1 complex, required for BDNF-NTRK2 endocytic trafficking and signaling from early endosomes. Also involved in the regulation of mitochondrial dynamics. This chain is Actin-binding protein WASF1 (Wasf1), found in Rattus norvegicus (Rat).